Reading from the N-terminus, the 918-residue chain is Calcium-transporting ATPase type 2C member 1 (918 aa).

At 1-75 the chain is on the cytoplasmic side; it reads MKVARFQKIP…SEDEPLWKKY (75 aa). Residues 76-96 traverse the membrane as a helical segment; the sequence is ISQFKNPLIMLLLASAVISVL. The Extracellular portion of the chain corresponds to 97–98; that stretch reads MH. A helical transmembrane segment spans residues 99–119; that stretch reads QFDDAVSITVAILIVVTVAFV. Topologically, residues 120–267 are cytoplasmic; that stretch reads QEYRSEKSLE…LQKSMDLLGK (148 aa). The helical transmembrane segment at 268 to 288 threads the bilayer; it reads QLSFYSFGIIGIIMLVGWLLG. The Extracellular segment spans residues 289–302; sequence KDILEMFTISVSLA. Residues 303–323 form a helical membrane-spanning segment; the sequence is VAAIPEGLPIVVTVTLALGVM. At 324–703 the chain is on the cytoplasmic side; the sequence is RMVKKRAIVK…IYNNIKNFVR (380 aa). The 4-aspartylphosphate intermediate role is filled by D350. D643 and D647 together coordinate Mg(2+). The chain crosses the membrane as a helical span at residues 704 to 724; that stretch reads FQLSTSIAALTLISLATLMNF. Over 725–732 the chain is Extracellular; that stretch reads PNPLNAMQ. The helical transmembrane segment at 733–753 threads the bilayer; that stretch reads ILWINIIMDGPPAQSLGVEPV. Residues 754 to 773 lie on the Cytoplasmic side of the membrane; the sequence is DKDVIRKPPRNWKDSILTKN. A helical transmembrane segment spans residues 774 to 794; the sequence is LILKILVSSIIIVCGTLFVFW. Topologically, residues 795 to 842 are extracellular; the sequence is RELRDNVITPRDTTMTFTCFVFFDMFNALSSRSQTKSVFEIGLCSNKM. Residues 843–863 traverse the membrane as a helical segment; it reads FCYAVLGSIMGQLLVIYFPPL. Topologically, residues 864 to 873 are cytoplasmic; the sequence is QKVFQTESLS. A helical membrane pass occupies residues 874–894; sequence ILDLLFLLGLTSSVCIVAEII. The Extracellular portion of the chain corresponds to 895-918; that stretch reads KKVERSREKIQKHVSSTSSSFLEV.

The protein belongs to the cation transport ATPase (P-type) (TC 3.A.3) family. Type IIA subfamily. As to quaternary structure, monomer. Homodimer.

The protein resides in the golgi apparatus. Its subcellular location is the trans-Golgi network membrane. It is found in the golgi stack membrane. It carries out the reaction Ca(2+)(in) + ATP + H2O = Ca(2+)(out) + ADP + phosphate + H(+). The catalysed reaction is Mn(2+)(in) + ATP + H2O = Mn(2+)(out) + ADP + phosphate + H(+). ATP-driven pump that supplies the Golgi apparatus with Ca(2+) and Mn(2+) ions, both essential cofactors for processing and trafficking of newly synthesized proteins in the secretory pathway. Within a catalytic cycle, acquires Ca(2+) or Mn(2+) ions on the cytoplasmic side of the membrane and delivers them to the lumenal side. The transfer of ions across the membrane is coupled to ATP hydrolysis and is associated with a transient phosphorylation that shifts the pump conformation from inward-facing to outward-facing state. Plays a primary role in the maintenance of Ca(2+) homeostasis in the trans-Golgi compartment with a functional impact on Golgi and post-Golgi protein sorting as well as a structural impact on cisternae morphology. Responsible for loading the Golgi stores with Ca(2+) ions in keratinocytes, contributing to keratinocyte differentiation and epidermis integrity. Participates in Ca(2+) and Mn(2+) ions uptake into the Golgi store of hippocampal neurons and regulates protein trafficking required for neural polarity. May also play a role in the maintenance of Ca(2+) and Mn(2+) homeostasis and signaling in the cytosol while preventing cytotoxicity. The protein is Calcium-transporting ATPase type 2C member 1 (ATP2C1) of Pongo abelii (Sumatran orangutan).